The following is a 220-amino-acid chain: Inner membrane protein YqjA (220 aa).

Topologically, residues 1–27 (MELLTQLLQALWAQDFETLANPSMIGM) are periplasmic. The helical transmembrane segment at 28–48 (LYFVLFVILFLENGLLPAAFL) threads the bilayer. Residues 49–52 (PGDS) lie on the Cytoplasmic side of the membrane. The next 2 helical transmembrane spans lie at 53–73 (LLVL…QTIL) and 74–94 (LLTV…RWLG). Topologically, residues 95–154 (NTRTVQNWLSHLPAHYHQRAHHLFHKHGLSALLIGRFIAFVRTLLPTIAGLSGLNNARFQ) are cytoplasmic. The chain crosses the membrane as a helical span at residues 155–175 (FFNWMSGLLWVLILTTLGYML). At 176–191 (GKTPVFLKYEDQLMSC) the chain is on the periplasmic side. The chain crosses the membrane as a helical span at residues 192–212 (LMLLPVVLLVFGLAGSLVVLW). Residues 213 to 220 (KKKYGNRG) lie on the Cytoplasmic side of the membrane.

The protein belongs to the DedA family.

The protein resides in the cell inner membrane. Its function is as follows. May be a membrane transporter required for proton motive force (PMF)-dependent drug efflux. Required, with YghB, for the proper export of certain periplasmic amidases and, possibly, other Tat substrates. May play a role in determining membrane lipid composition. This chain is Inner membrane protein YqjA (yqjA), found in Escherichia coli (strain K12).